A 494-amino-acid chain; its full sequence is Aspartyl/glutamyl-tRNA(Asn/Gln) amidotransferase subunit B (494 aa).

It belongs to the GatB/GatE family. GatB subfamily. As to quaternary structure, heterotrimer of A, B and C subunits.

It carries out the reaction L-glutamyl-tRNA(Gln) + L-glutamine + ATP + H2O = L-glutaminyl-tRNA(Gln) + L-glutamate + ADP + phosphate + H(+). The catalysed reaction is L-aspartyl-tRNA(Asn) + L-glutamine + ATP + H2O = L-asparaginyl-tRNA(Asn) + L-glutamate + ADP + phosphate + 2 H(+). In terms of biological role, allows the formation of correctly charged Asn-tRNA(Asn) or Gln-tRNA(Gln) through the transamidation of misacylated Asp-tRNA(Asn) or Glu-tRNA(Gln) in organisms which lack either or both of asparaginyl-tRNA or glutaminyl-tRNA synthetases. The reaction takes place in the presence of glutamine and ATP through an activated phospho-Asp-tRNA(Asn) or phospho-Glu-tRNA(Gln). The sequence is that of Aspartyl/glutamyl-tRNA(Asn/Gln) amidotransferase subunit B from Synechococcus sp. (strain CC9902).